Consider the following 65-residue polypeptide: Large ribosomal subunit protein bL35 (65 aa).

2 disordered regions span residues M1–K23 and M36–A65. The span at D54 to A65 shows a compositional bias: polar residues.

This sequence belongs to the bacterial ribosomal protein bL35 family.

This is Large ribosomal subunit protein bL35 from Francisella tularensis subsp. tularensis (strain FSC 198).